An 874-amino-acid polypeptide reads, in one-letter code: MLKKFDKKDEESGGGSNPFQHLEKSAVLQEARVFNETPINPRKCAHILTKILYLINQGEHLGTTEATEAFFAMTKLFQSNDPTLRRMCYLTIKEMSCIAEDVIIVTSSLTKDMTGKEDSYRGPAVRALCQITDSTMLQAIERYMKQAIVDKVPSVSSSALVSSLHLLKCSFDVVKRWVNEAQEAASSDNIMVQYHALGLLYHVRKNDRLAVSKMISKFTRHGLKSPFAYCMMIRVASRQLEDEDGSRDSPLFDFIESCLRNKHEMVVYEAASAIVNLPGCSAKELAPAVSVLQLFCSSPKAALRYAAVRTLNKVAMKHPSAVTACNLDLENLVTDANRSIATLAITTLLKTGSEGSIDRLMKQISSFMSEISDEFKVVVVQAISALCQKYPRKHAVLMNFLFSMLREEGGFEYKRAIVDCIISIIEENAESKETGLSHLCEFIEDCEFTVLATRILHLLGQEGPRTSNPSKYIRFIYNRVVLEHAEVRAGAVSALAKFGAQNEEMLPSILVLLKRCVMDDDNEVRDRATFYLNVLEQKQKALNAGYILNGLAVSIPGLERALQQYTLEPSEKPFDLKSVPLATAPLAEQRTESTPVTAAKQPEKVAATRQEIFQEQLAAVPEFQGLGPLFKSSPEPVALTESETEYVIRCTKHTFTDHMVFQFDCTNTLNDQTLENVTVQMEPSEAYEVLCYVPARSLPYNQPGTCYTLVALPKEDPTAVACTFSCVMKFTVKDCDPTTGEADDEGYEDEYVLEDLEVTIADHIQKVMKLNFEAAWDEVGDEFQKEETFTLSTIKTLEEAVGNIVKFLGMHPCERSDKVPDNKNTHTLLLAGVFRGGHDILVRSRLLLLDTVTMQVTARSSEELPVDIVLASVG.

Basic and acidic residues predominate over residues 1 to 11 (MLKKFDKKDEE). Residues 1–21 (MLKKFDKKDEESGGGSNPFQH) are disordered. HEAT repeat units lie at residues 64 to 101 (TEATEAFFAMTKLFQSNDPTLRRMCYLTIKEMSCIAED), 283 to 320 (KELAPAVSVLQLFCSSPKAALRYAAVRTLNKVAMKHPS), 322 to 355 (VTACNLDLENLVTDANRSIATLAITTLLKTGSEG), and 356 to 392 (SIDRLMKQISSFMSEISDEFKVVVVQAISALCQKYPR). T594 carries the phosphothreonine modification. The segment at 609 to 874 (RQEIFQEQLA…PVDIVLASVG (266 aa)) is interaction with ZNF289/ARFGAP2.

This sequence belongs to the COPG family. Oligomeric complex that consists of at least the alpha, beta, beta', gamma, delta, epsilon and zeta subunits. Interacts with ZNF289/ARFGAP2 through its C-terminal appendage domain. Interacts with EGFR upon EGF treatment; interaction is essential for regulation of EGF-dependent nuclear transport of EGFR by retrograde trafficking from the Golgi to the ER. The coatomer interacts with KDEL receptors; the interaction is important for retrograde trafficking of KDEL-bearing proteins from the Golgi to the endoplasmic reticulum. Interacts with COPB1. Interacts with TMED10 (via C-terminus). Interacts with TMED2, TMED3, TMED7 and TMED9.

It is found in the cytoplasm. Its subcellular location is the cytosol. It localises to the golgi apparatus membrane. The protein localises to the cytoplasmic vesicle. The protein resides in the COPI-coated vesicle membrane. Its function is as follows. The coatomer is a cytosolic protein complex that binds to dilysine motifs and reversibly associates with Golgi non-clathrin-coated vesicles, which further mediate biosynthetic protein transport from the ER, via the Golgi up to the trans Golgi network. Coatomer complex is required for budding from Golgi membranes, and is essential for the retrograde Golgi-to-ER transport of dilysine-tagged proteins. In mammals, the coatomer can only be recruited by membranes associated to ADP-ribosylation factors (ARFs), which are small GTP-binding proteins; the complex also influences the Golgi structural integrity, as well as the processing, activity, and endocytic recycling of LDL receptors. Required for limiting lipid storage in lipid droplets. Involved in lipid homeostasis by regulating the presence of perilipin family members PLIN2 and PLIN3 at the lipid droplet surface and promoting the association of adipocyte triglyceride lipase (PNPLA2) with the lipid droplet surface to mediate lipolysis. The chain is Coatomer subunit gamma-1 (COPG1) from Bos taurus (Bovine).